The primary structure comprises 727 residues: Protein edg-1 (727 aa).

The disordered stretch occupies residues 703 to 727 (FAESSVKPTTSSAYGNSSNFSRYAD).

May interact with deps-1 and prg-1.

It is found in the cytoplasmic granule. In terms of biological role, plays a role in regulating deps-1 cluster formation in the germline. The sequence is that of Protein edg-1 from Caenorhabditis elegans.